Reading from the N-terminus, the 965-residue chain is Pullulanase 1, chloroplastic (965 aa).

The N-terminal 62 residues, 1–62, are a transit peptide targeting the chloroplast; sequence MALTLTPTSS…SKTSLHCLCS (62 aa). D552 serves as the catalytic Nucleophile. E589 serves as the catalytic Proton donor.

This sequence belongs to the glycosyl hydrolase 13 family.

The protein localises to the plastid. It localises to the chloroplast stroma. The enzyme catalyses Hydrolysis of (1-&gt;6)-alpha-D-glucosidic linkages in alpha- and beta-limit dextrins of amylopectin and glycogen, and in amylopectin and pullulan.. It functions in the pathway glycan biosynthesis; starch biosynthesis. Its pathway is glycan degradation; starch degradation. Functionally, involved in starch degradation and also probably in the trimming of pre-amylopectin chains during starch synthesis. The sequence is that of Pullulanase 1, chloroplastic (PU1) from Arabidopsis thaliana (Mouse-ear cress).